The sequence spans 95 residues: Lipolysis-activating peptide 1-beta chain (95 aa).

Positions 1–22 (MISVQVIFIAFISIIAFSMVCG) are cleaved as a signal peptide. The LCN-type CS-alpha/beta domain maps to 23–91 (GNVFPNRELG…FLNALEKQCP (69 aa)). 3 disulfides stabilise this stretch: C37–C60, C45–C70, and C49–C72.

As to quaternary structure, homodimer; disulfide-linked or monomer (edited version) or heterodimer of an alpha chain (AC P84810) and this beta chain (non-edited version). In terms of tissue distribution, expressed by the venom gland.

It is found in the secreted. The homodimer inhibits HMG-CoA reductase (HMGCR) (32% of inhibition produced by 0.6 uM), a glycoprotein involved in the control of cholesterol biosynthesis. The inhibitory effects of bumarsin are seen at much lower concentrations (0.6 uM) than that for statins such as atorvastatin (5 mM) and simvastatin (10 uM). In addition to inhibition of HMG-CoA reductase, this protein lowers cholesterol levels by inducing steroid hormone synthesis via StAR, and by increasing reverse cholesterol transport mediated by the induction of ABCA1 and APOA1. In terms of biological role, the heterodimer non-edited LVP1 induces lipolysis in rat adipocytes. Induction of lipolysis by LVP1 appears to be mediated through the beta-2 adrenergic receptor pathway (ADRB2). Intracerebroventricular injection is not toxic to mice. Its function is as follows. The monomer edited version, similar to alpha-toxins, may modulate voltage-gated sodium channels (Nav) and may block voltage-gated potassium channels (Kv). The protein is Lipolysis-activating peptide 1-beta chain of Buthus occitanus tunetanus (Common European scorpion).